The following is a 318-amino-acid chain: Protease HtpX homolog (318 aa).

The next 2 membrane-spanning stretches (helical) occupy residues 6 to 26 (TAMLLAFMTALFMFVGFLIGG) and 28 to 48 (GGMMIAFLIAAGMNFFSYWNS). His-130 serves as a coordination point for Zn(2+). Residue Glu-131 is part of the active site. His-134 lines the Zn(2+) pocket. The next 2 helical transmembrane spans lie at 145–165 (ITATLAGAISMLGNFAFFFGG) and 173–193 (PLGFVGVLVAMIVAPLAAMLV). Residue Glu-202 coordinates Zn(2+). Positions 284 to 318 (NVSTGPVRAVNPTRKSRSVPNTGRGGSQPPRGPWS) are disordered.

The protein belongs to the peptidase M48B family. It depends on Zn(2+) as a cofactor.

The protein localises to the cell inner membrane. This chain is Protease HtpX homolog, found in Rhizobium etli (strain ATCC 51251 / DSM 11541 / JCM 21823 / NBRC 15573 / CFN 42).